The following is a 400-amino-acid chain: PHD finger protein 24 (400 aa).

Glycine 2 carries N-myristoyl glycine lipidation. The segment at 30 to 108 is disordered; sequence DRPSIRRTGE…FTPPAFIRPT (79 aa). An Omega-N-methylarginine modification is found at arginine 36. Serine 43 bears the Phosphoserine mark. Position 47 is a phosphothreonine (threonine 47). At serine 51 the chain carries Phosphoserine. The span at 78-97 shows a compositional bias: basic and acidic residues; the sequence is AWERLRDGRGVEPEEFDRTG. The PHD-type zinc-finger motif lies at 129–190; sequence NDEMCDVCEV…TGWSCHYCDN (62 aa).

The chain is PHD finger protein 24 from Pongo abelii (Sumatran orangutan).